A 341-amino-acid chain; its full sequence is Glucokinase (341 aa).

18-23 lines the ATP pocket; sequence GDIGGT.

This sequence belongs to the bacterial glucokinase family.

Its subcellular location is the cytoplasm. It catalyses the reaction D-glucose + ATP = D-glucose 6-phosphate + ADP + H(+). The protein is Glucokinase of Rhizobium johnstonii (strain DSM 114642 / LMG 32736 / 3841) (Rhizobium leguminosarum bv. viciae).